A 358-amino-acid chain; its full sequence is Peptide chain release factor 1 (358 aa).

At Q233 the chain carries N5-methylglutamine.

Belongs to the prokaryotic/mitochondrial release factor family. Post-translationally, methylated by PrmC. Methylation increases the termination efficiency of RF1.

The protein resides in the cytoplasm. Its function is as follows. Peptide chain release factor 1 directs the termination of translation in response to the peptide chain termination codons UAG and UAA. This is Peptide chain release factor 1 from Clostridium botulinum (strain Loch Maree / Type A3).